A 188-amino-acid chain; its full sequence is Elongation factor P (188 aa).

This sequence belongs to the elongation factor P family.

Its subcellular location is the cytoplasm. The protein operates within protein biosynthesis; polypeptide chain elongation. In terms of biological role, involved in peptide bond synthesis. Stimulates efficient translation and peptide-bond synthesis on native or reconstituted 70S ribosomes in vitro. Probably functions indirectly by altering the affinity of the ribosome for aminoacyl-tRNA, thus increasing their reactivity as acceptors for peptidyl transferase. This chain is Elongation factor P, found in Malacoplasma penetrans (strain HF-2) (Mycoplasma penetrans).